Reading from the N-terminus, the 3898-residue chain is Genome polyprotein (3898 aa).

One can recognise a Peptidase C53 domain in the interval 1-168; it reads MELITNELLY…LDCPLWVTSC (168 aa). Disordered regions lie at residues 47 to 72, 172 to 209, and 223 to 245; these read LPHKRGERNVPTSLASLPKRGDCRSG, KEEGATKKKQQKPDRLEKGRMKIVPKESEKDSKTKPPD, and KKGKVKSKNTQDGLYHNKNKPPE. Active-site for N-terminal protease activity residues include His49 and Cys69. Basic and acidic residues predominate over residues 172-207; sequence KEEGATKKKQQKPDRLEKGRMKIVPKESEKDSKTKP. Residues Asn272, Asn281, Asn296, and Asn335 are each glycosylated (N-linked (GlcNAc...) asparagine; by host). 2 disulfides stabilise this stretch: Cys308/Cys352 and Cys338/Cys339. Active-site for E(rns) glycoprotein RNase activity residues include His344, Glu345, Lys348, and His349. 2 N-linked (GlcNAc...) asparagine; by host glycosylation sites follow: Asn365 and Asn370. 2 disulfide bridges follow: Cys380-Cys425 and Cys384-Cys408. Asn413, Asn487, and Asn597 each carry an N-linked (GlcNAc...) asparagine; by host glycan. The Lumenal segment spans residues 498–666; the sequence is ASPYCDVDRK…WNAATTTAFL (169 aa). Residues 667 to 687 traverse the membrane as a helical segment; that stretch reads VCLIKMVRGQVVQGILWLLLI. Residues 688 to 1035 are Lumenal-facing; the sequence is TGVQGHLDCK…DHHRDYFAES (348 aa). 2 disulfides stabilise this stretch: Cys696–Cys740 and Cys751–Cys798. Residues Asn809, Asn878, Asn922, and Asn990 are each glycosylated (N-linked (GlcNAc...) asparagine; by host). The next 8 helical transmembrane spans lie at 1036 to 1056, 1079 to 1099, 1108 to 1128, 1144 to 1164, 1189 to 1209, 1217 to 1237, 1247 to 1267, and 1281 to 1301; these read ILVVVVALLGGRYVLWLLVTY, NLLTHDNVEVVTYFFLLYLLL, VLLLYHILVAHPLKSVIVILL, LGQIDVCFTMVVIIIIGLIIA, PGVDAAMAVITITLLMVSYVT, WLQCILSLVSGVFLIRCLIHL, IPNWRPLTLILFYLISTTVVT, and VPILLLITTLWADFLTLILIL. Asn1357 carries an N-linked (GlcNAc...) asparagine; by host glycan. A helical membrane pass occupies residues 1360 to 1380; it reads MLLPLVRATLISCVSSKWQLI. Asn1419 carries an N-linked (GlcNAc...) asparagine; by host glycan. A Peptidase C74 domain is found at 1441–1589; that stretch reads RNLIIKHKVR…DLEHLGWILR (149 aa). The active-site For cysteine protease NS2 activity is His1447. The N-linked (GlcNAc...) asparagine; by host glycan is linked to Asn1451. Residues Glu1461 and Cys1512 each act as for cysteine protease NS2 activity in the active site. Residues 1568 to 1588 traverse the membrane as a helical segment; it reads MLMVGNLGEEVGDLEHLGWIL. In terms of domain architecture, Peptidase S31 spans 1590-1763; that stretch reads GPAVCKKITE…LPIFEASSGR (174 aa). Residues His1658 and Asp1695 each act as charge relay system; for serine protease NS3 activity in the active site. Asn1713 carries N-linked (GlcNAc...) asparagine; by host glycosylation. The Charge relay system; for serine protease NS3 activity role is filled by Ser1752. The 159-residue stretch at 1802–1960 folds into the Helicase ATP-binding domain; sequence ITSMNRGDFK…QKHPIEEFIA (159 aa). ATP is bound at residue 1815 to 1822; the sequence is LATGAGKT. Positions 1910 to 1913 match the DEAH box motif; sequence DEYH. Positions 1978–2143 constitute a Helicase C-terminal domain; the sequence is GLKIPVDEMK…NVTKSFREMN (166 aa). N-linked (GlcNAc...) asparagine; by host glycans are attached at residues Asn2134, Asn2217, Asn2494, Asn2682, Asn2751, Asn2891, and Asn2988. Residues Thr3499 and Leu3501 each coordinate GTP. One can recognise a RdRp catalytic domain in the interval 3518 to 3641; that stretch reads PVAVSFDTKA…ITEKGLGLKF (124 aa). The N-linked (GlcNAc...) asparagine; by host glycan is linked to Asn3688. GTP is bound by residues Arg3696 and Lys3704. Asn3777 and Asn3793 each carry an N-linked (GlcNAc...) asparagine; by host glycan.

It belongs to the pestivirus polyprotein family. Homodimer; disulfide-linked. In terms of assembly, homodimer; disulfide-linked. Heterodimer with E1; disulfide-linked. As to quaternary structure, interacts with host IFIH1/MDA5; this interaction is involved in the inhibition of IFN-beta production. In terms of processing, heavily glycosylated. Post-translationally, the viral RNA of pestiviruses is expressed as a single polyprotein which undergoes post-translational proteolytic processing resulting in the production of at least eleven individual proteins. The N-terminal protease cleaves itself from the nascent polyprotein autocatalytically and thereby generates the N-terminus of the adjacent viral capsid protein C. Cleavage between E2 and p7 is partial.

The protein localises to the virion. It localises to the host membrane. The protein resides in the virion membrane. It is found in the host endoplasmic reticulum membrane. Its subcellular location is the host cytoplasm. The catalysed reaction is Leu is conserved at position P1 for all four cleavage sites. Alanine is found at position P1' of the NS4A-NS4B cleavage site, whereas serine is found at position P1' of the NS3-NS4A, NS4B-NS5A and NS5A-NS5B cleavage sites.. It carries out the reaction RNA(n) + a ribonucleoside 5'-triphosphate = RNA(n+1) + diphosphate. The enzyme catalyses a ribonucleoside 5'-triphosphate + H2O = a ribonucleoside 5'-diphosphate + phosphate + H(+). It catalyses the reaction ATP + H2O = ADP + phosphate + H(+). The catalysed reaction is a ribonucleotidyl-ribonucleotide-RNA + H2O = a 3'-end 3'-phospho-ribonucleotide-RNA + a 5'-end dephospho-ribonucleoside-RNA + H(+). It carries out the reaction a ribonucleotidyl-ribonucleotide-RNA = a 3'-end 2',3'-cyclophospho-ribonucleotide-RNA + a 5'-end dephospho-ribonucleoside-RNA. The enzyme catalyses a 3'-end 2',3'-cyclophospho-ribonucleotide-RNA + H2O = a 3'-end 3'-phospho-ribonucleotide-RNA + H(+). Its activity is regulated as follows. Inhibited by Zn(2+), which binds the catalytic site. Its function is as follows. Leader cysteine autoprotease that cleaves itself from the nascent polyprotein during translation of the viral mRNA. Once released, plays a role in the inhibition of host innate immune response by interacting with host IRF3 and inducing its proteasomal degradation. In terms of biological role, packages viral RNA to form a viral nucleocapsid and thereby protects viral RNA. Also plays a role in transcription regulation. Protects the incoming virus against IFN-induced effectors. Functionally, initial binding to target cell probably involves interaction of E(rns) with glycosaminoglycans. Also possesses intrinsic ribonuclease (RNase) activity that can inhibit the production of type I interferon and assist in the development of persistent infections. E1 and/or E2 are probably responsible of cell attachment with CD46 and subsequent fusion after internalization of the virion by endocytosis. Its function is as follows. E1 and/or E2 are probably responsible of cell attachment with CD46 and subsequent fusion after internalization of the virion by endocytosis. Probably functions as a coeffector of fusion providing structural integrity to the fusion complex and possibly controlling exposure of the fusion motif in E1. In terms of biological role, plays an essential role in the virus replication cycle by acting as a viroporin. Forms ion conductive pores, which alters the cell permeability allowing the transport of ions and other small molecules. Forms a leader sequence to properly orient NS2 in the membrane. Functionally, uncleaved NS2-3 is required for production of infectious virus. Plays a role in the regulation of viral RNA replication. Its function is as follows. Multifunctional protein that contains an N-terminal protease and a C-terminal helicase, playing essential roles in viral polyprotein processing and viral genome replication. The chymotrypsin-like serine protease activity utilizes NS4A as an essential cofactor and catalyzes the cleavage of the polyprotein leading to the release of NS4A, NS4B, NS5A, and NS5B. Interacts with NS5B to enhance RNA-dependent RNA polymerase activity. In terms of biological role, acts as a cofactor for the NS3 protease activity. Functionally, induces a specific membrane alteration that serves as a scaffold for the virus replication complex. Plays a role in the inhibition of host innate immune response by inhibiting RIGI/IFIH1-mediated IFN-beta production. Replicates the viral (+) and (-) genome. Initiates the primer-independent RNA replication via a de novo mechanism requiring GTP. This is Genome polyprotein from Bos taurus (Bovine).